Here is a 556-residue protein sequence, read N- to C-terminus: 2-succinyl-5-enolpyruvyl-6-hydroxy-3-cyclohexene-1-carboxylate synthase (556 aa).

The protein belongs to the TPP enzyme family. MenD subfamily. In terms of assembly, homodimer. Mg(2+) is required as a cofactor. Requires Mn(2+) as cofactor. Thiamine diphosphate serves as cofactor.

It catalyses the reaction isochorismate + 2-oxoglutarate + H(+) = 5-enolpyruvoyl-6-hydroxy-2-succinyl-cyclohex-3-ene-1-carboxylate + CO2. It participates in quinol/quinone metabolism; 1,4-dihydroxy-2-naphthoate biosynthesis; 1,4-dihydroxy-2-naphthoate from chorismate: step 2/7. The protein operates within quinol/quinone metabolism; menaquinone biosynthesis. Catalyzes the thiamine diphosphate-dependent decarboxylation of 2-oxoglutarate and the subsequent addition of the resulting succinic semialdehyde-thiamine pyrophosphate anion to isochorismate to yield 2-succinyl-5-enolpyruvyl-6-hydroxy-3-cyclohexene-1-carboxylate (SEPHCHC). The chain is 2-succinyl-5-enolpyruvyl-6-hydroxy-3-cyclohexene-1-carboxylate synthase from Staphylococcus epidermidis (strain ATCC 12228 / FDA PCI 1200).